The primary structure comprises 507 residues: Alpha-amylase 2 (507 aa).

An N-terminal signal peptide occupies residues 1 to 20 (MKFATILSTTALALSSLVAS). Cys-62 and Cys-70 form a disulfide bridge. Trp-115 contributes to the substrate binding site. Asn-153 is a binding site for Ca(2+). Substrate is bound at residue His-154. Cysteines 182 and 196 form a disulfide. 2 residues coordinate Ca(2+): Glu-194 and Asp-207. N-linked (GlcNAc...) asparagine glycosylation occurs at Asn-229. Residue Arg-236 participates in substrate binding. Ca(2+)-binding residues include Asp-238, His-242, and Glu-262. The active-site Nucleophile is the Asp-238. 241–242 (KH) is a substrate binding site. Glu-262 (proton donor) is an active-site residue. Gly-266 contributes to the substrate binding site. The cysteines at positions 272 and 315 are disulfide-linked. Residues Asp-329 and Arg-376 each contribute to the substrate site. A disulfide bridge links Cys-470 with Cys-505.

It belongs to the glycosyl hydrolase 13 family. Ca(2+) is required as a cofactor.

It catalyses the reaction Endohydrolysis of (1-&gt;4)-alpha-D-glucosidic linkages in polysaccharides containing three or more (1-&gt;4)-alpha-linked D-glucose units.. This Schwanniomyces occidentalis (Yeast) protein is Alpha-amylase 2 (SWA2).